Reading from the N-terminus, the 1386-residue chain is DNA-directed RNA polymerase subunit beta'' (1386 aa).

4 residues coordinate Zn(2+): C220, C289, C296, and C299.

Belongs to the RNA polymerase beta' chain family. RpoC2 subfamily. In plastids the minimal PEP RNA polymerase catalytic core is composed of four subunits: alpha, beta, beta', and beta''. When a (nuclear-encoded) sigma factor is associated with the core the holoenzyme is formed, which can initiate transcription. Zn(2+) serves as cofactor.

The protein localises to the plastid. It is found in the chloroplast. The enzyme catalyses RNA(n) + a ribonucleoside 5'-triphosphate = RNA(n+1) + diphosphate. In terms of biological role, DNA-dependent RNA polymerase catalyzes the transcription of DNA into RNA using the four ribonucleoside triphosphates as substrates. The polypeptide is DNA-directed RNA polymerase subunit beta'' (Marchantia polymorpha (Common liverwort)).